Consider the following 154-residue polypeptide: 6,7-dimethyl-8-ribityllumazine synthase (154 aa).

Residues F22, 56 to 58 (AFE), and 80 to 82 (TVI) each bind 5-amino-6-(D-ribitylamino)uracil. Residue 85-86 (AT) coordinates (2S)-2-hydroxy-3-oxobutyl phosphate. H88 (proton donor) is an active-site residue. 5-amino-6-(D-ribitylamino)uracil is bound at residue F113. R127 contributes to the (2S)-2-hydroxy-3-oxobutyl phosphate binding site.

It belongs to the DMRL synthase family. As to quaternary structure, forms an icosahedral capsid composed of 60 subunits, arranged as a dodecamer of pentamers.

The enzyme catalyses (2S)-2-hydroxy-3-oxobutyl phosphate + 5-amino-6-(D-ribitylamino)uracil = 6,7-dimethyl-8-(1-D-ribityl)lumazine + phosphate + 2 H2O + H(+). The protein operates within cofactor biosynthesis; riboflavin biosynthesis; riboflavin from 2-hydroxy-3-oxobutyl phosphate and 5-amino-6-(D-ribitylamino)uracil: step 1/2. Its function is as follows. Catalyzes the formation of 6,7-dimethyl-8-ribityllumazine by condensation of 5-amino-6-(D-ribitylamino)uracil with 3,4-dihydroxy-2-butanone 4-phosphate. This is the penultimate step in the biosynthesis of riboflavin. This chain is 6,7-dimethyl-8-ribityllumazine synthase, found in Bacillus amyloliquefaciens (Bacillus velezensis).